A 49-amino-acid chain; its full sequence is Delta-actitoxin-Axm1h (49 aa).

Disulfide bonds link Cys4–Cys46, Cys6–Cys36, and Cys29–Cys47.

Belongs to the sea anemone sodium channel inhibitory toxin family. Type I subfamily.

The protein resides in the secreted. It localises to the nematocyst. In terms of biological role, binds specifically to voltage-gated sodium channels (Nav) (site 3), thereby delaying their inactivation during signal transduction. Thus it may strongly stimulate mammalian cardiac muscle contraction. The sequence is that of Delta-actitoxin-Axm1h from Anthopleura xanthogrammica (Giant green sea anemone).